The primary structure comprises 109 residues: Nascent polypeptide-associated complex protein (109 aa).

Residues 3-70 (PMNPKQMKKM…YEVVKRPPKI (68 aa)) enclose the NAC-A/B domain.

It belongs to the NAC-alpha family. Homodimer. Interacts with the ribosome. Binds ribosomal RNA.

Functionally, contacts the emerging nascent chain on the ribosome. The protein is Nascent polypeptide-associated complex protein of Archaeoglobus fulgidus (strain ATCC 49558 / DSM 4304 / JCM 9628 / NBRC 100126 / VC-16).